The chain runs to 966 residues: MAKGFYISKTLGILGILLGVAAVCTIIALSVVYAQEKNRNAENSATAPTLPGSTSATTATTTPAVDESKPWNQYRLPKTLIPDSYRVILRPYLTPNNQGLYIFQGNSTVRFTCNQTTDVIIIHSKKLNYTLKGNHRVVLRTLDGTPAPNIDKTELVERTEYLVVHLQGSLVEGRQYEMDSQFQGELADDLAGFYRSEYMEGDVKKVVATTQMQAADARKSFPCFDEPAMKAMFNITLIYPNNLIALSNMLPKESKPYPEDPSCTMTEFHSTPKMSTYLLAYIVSEFKNISSVSANGVQIGIWARPSAIDEGQGDYALNVTGPILNFFAQHYNTSYPLPKSDQIALPDFNAGAMENWGLVTYRESSLVFDSQSSSISNKERVVTVIAHELAHQWFGNLVTVAWWNDLWLNEGFASYVEYLGADYAEPTWNLKDLMVLNDVYRVMAVDALASSHPLSSPADEIKTPDQIMELFDSITYSKGASVIRMLSSFLTEDLFKKGLSSYLHTYQYSNTVYLDLWEHLQKAVNQQTAVQPPATVRTIMDRWILQMGFPVITVNTNTGEISQKHFLLDSKSNVTRPSEFNYIWIAPIPFLKSGQEDHYWLDVEKNQSAKFQTSSNEWILLNINVTGYYLVNYDENNWKKLQNQLQTDLSVIPVINRAQIIHDSFNLASAKMIPITLALDNTLFLVKEAEYMPWQAALSSLNYFTLMFDRSEVYGPMKRYLKKQVTPLFFYFQNRTNNWVNRPPTLMEQYNEINAISTACSSGLKECRDLVVELYSQWMKNPNNNTIHPNLRSTVYCNAIAFGGEEEWNFAWEQFRNATLVNEADKLRSALACSKDVWILNRYLSYTLNPDYIRKQDTTSTIISIASNVAGHPLVWDFVRSNWKKLFENYGGGSFSFANLIQGVTRRFSSEFELQQLEQFKADNSATGFGTGTRALEQALEKTRANIDWVKENKDAVFKWFTENSS.

The Cytoplasmic segment spans residues 1–8 (MAKGFYIS). Residues 9–32 (KTLGILGILLGVAAVCTIIALSVV) form a helical; Signal-anchor for type II membrane protein membrane-spanning segment. The cytosolic Ser/Thr-rich junction stretch occupies residues 33-68 (YAQEKNRNAENSATAPTLPGSTSATTATTTPAVDES). Residues 33–966 (YAQEKNRNAE…VFKWFTENSS (934 aa)) are Extracellular-facing. The tract at residues 42–64 (ENSATAPTLPGSTSATTATTTPA) is disordered. The span at 44–64 (SATAPTLPGSTSATTATTTPA) shows a compositional bias: low complexity. The tract at residues 69–966 (KPWNQYRLPK…VFKWFTENSS (898 aa)) is metalloprotease. 3 N-linked (GlcNAc...) asparagine glycosylation sites follow: Asn106, Asn114, and Asn128. The residue at position 176 (Tyr176) is a Sulfotyrosine. 4 N-linked (GlcNAc...) asparagine glycosylation sites follow: Asn234, Asn288, Asn318, and Asn332. Residue 351-355 (GAMEN) participates in substrate binding. Position 387 (His387) interacts with Zn(2+). Residue Glu388 is the Proton acceptor of the active site. Zn(2+) contacts are provided by His391 and Glu410. Sulfotyrosine occurs at positions 418 and 423. Asn573, Asn606, Asn624, and Asn734 each carry an N-linked (GlcNAc...) asparagine glycan. Residues Cys760 and Cys767 are joined by a disulfide bond. Asn784 and Asn817 each carry an N-linked (GlcNAc...) asparagine glycan. A disulfide bridge links Cys797 with Cys833. Residue Tyr852 is modified to Phosphotyrosine.

Belongs to the peptidase M1 family. Homodimer. Interacts with SLC6A19. It depends on Zn(2+) as a cofactor. Post-translationally, N- and O-glycosylated. Sulfated. In terms of processing, may undergo proteolysis and give rise to a soluble form. In terms of tissue distribution, expressed in the intestinal brush border (at protein level). Highly expressed in intestinal tract and kidney, present in liver, lymph node, spleen, and brain. Found as well in monocytes, macrophages, dendritic cells, veiled cells and B-cells but not on T-cells and thymocytes.

It is found in the cell membrane. The enzyme catalyses Release of an N-terminal amino acid, Xaa-|-Yaa- from a peptide, amide or arylamide. Xaa is preferably Ala, but may be most amino acids including Pro (slow action). When a terminal hydrophobic residue is followed by a prolyl residue, the two may be released as an intact Xaa-Pro dipeptide.. Its function is as follows. Broad specificity aminopeptidase which plays a role in the final digestion of peptides generated from hydrolysis of proteins by gastric and pancreatic proteases. Also involved in the processing of various peptides including peptide hormones, such as angiotensin III and IV, neuropeptides, and chemokines. May also be involved the cleavage of peptides bound to major histocompatibility complex class II molecules of antigen presenting cells. May have a role in angiogenesis and promote cholesterol crystallization. May have a role in amino acid transport by acting as binding partner of amino acid transporter SLC6A19 and regulating its activity. The sequence is that of Aminopeptidase N (Anpep) from Mus musculus (Mouse).